A 249-amino-acid polypeptide reads, in one-letter code: Ubiquinone biosynthesis protein COQ4 homolog, mitochondrial (249 aa).

His-134, Asp-135, His-138, and Glu-150 together coordinate Zn(2+).

It belongs to the COQ4 family. Component of a multi-subunit COQ enzyme complex. The cofactor is Zn(2+).

The protein resides in the mitochondrion inner membrane. It carries out the reaction a 4-hydroxy-3-methoxy-5-(all-trans-polyprenyl)benzoate + H(+) = a 2-methoxy-6-(all-trans-polyprenyl)phenol + CO2. It participates in cofactor biosynthesis; ubiquinone biosynthesis. Functionally, lyase that catalyzes the C1-decarboxylation of 4-hydroxy-3-methoxy-5-(all-trans-polyprenyl)benzoic acid into 2-methoxy-6-(all-trans-polyprenyl)phenol during ubiquinone biosynthesis. This chain is Ubiquinone biosynthesis protein COQ4 homolog, mitochondrial, found in Trypanosoma brucei brucei (strain 927/4 GUTat10.1).